The primary structure comprises 101 residues: MDPVDPNLEPWNHPGSQPKTPCNKCFCKVCCWHCQVCFLNKGLGISYGRKKRKHRRGTPQSSKGHQDPVPKQPLPTTRGNPTGPKESKKEVASKAEADQCD.

The interval 1–24 (MDPVDPNLEPWNHPGSQPKTPCNK) is interaction with human CREBBP. Residues 1–48 (MDPVDPNLEPWNHPGSQPKTPCNKCFCKVCCWHCQVCFLNKGLGISYG) are transactivation. Zn(2+) contacts are provided by Cys-22, Cys-25, and Cys-27. The interval 22 to 37 (CNKCFCKVCCWHCQVC) is cysteine-rich. Lys-28 carries the N6-acetyllysine; by host PCAF modification. Zn(2+) is bound by residues Cys-30, His-33, Cys-34, and Cys-37. Residues 38-48 (FLNKGLGISYG) are core. The span at 48 to 57 (GRKKRKHRRG) shows a compositional bias: basic residues. The interval 48–101 (GRKKRKHRRGTPQSSKGHQDPVPKQPLPTTRGNPTGPKESKKEVASKAEADQCD) is disordered. Residues 49 to 57 (RKKRKHRRG) carry the Nuclear localization signal, RNA-binding (TAR), and protein transduction motif. An interaction with the host capping enzyme RNGTT region spans residues 49-86 (RKKRKHRRGTPQSSKGHQDPVPKQPLPTTRGNPTGPKE). Lys-50 and Lys-51 each carry N6-acetyllysine; by host EP300 and GCN5L2. Arg-52 carries the post-translational modification Asymmetric dimethylarginine; by host PRMT6. A Glycyl lysine isopeptide (Lys-Gly) (interchain with G-Cter in ubiquitin) cross-link involves residue Lys-71. Residues 85–101 (KESKKEVASKAEADQCD) show a composition bias toward basic and acidic residues.

Belongs to the lentiviruses Tat family. As to quaternary structure, interacts with host CCNT1. Associates with the P-TEFb complex composed at least of Tat, P-TEFb (CDK9 and CCNT1), TAR RNA, RNA Pol II. Recruits the HATs CREBBP, TAF1/TFIID, EP300, PCAF and GCN5L2. Interacts with host KAT5/Tip60; this interaction targets the latter to degradation. Interacts with the host deacetylase SIRT1. Interacts with host capping enzyme RNGTT; this interaction stimulates RNGTT. Binds to host KDR, and to the host integrins ITGAV/ITGB3 and ITGA5/ITGB1. Interacts with host KPNB1/importin beta-1 without previous binding to KPNA1/importin alpha-1. Interacts with EIF2AK2. Interacts with host nucleosome assembly protein NAP1L1; this interaction may be required for the transport of Tat within the nucleus, since the two proteins interact at the nuclear rim. Interacts with host C1QBP/SF2P32; this interaction involves lysine-acetylated Tat. Interacts with the host chemokine receptors CCR2, CCR3 and CXCR4. Interacts with host DPP4/CD26; this interaction may trigger an anti-proliferative effect. Interacts with host LDLR. Interacts with the host extracellular matrix metalloproteinase MMP1. Interacts with host PRMT6; this interaction mediates Tat's methylation. Interacts with, and is ubiquitinated by MDM2/Hdm2. Interacts with host PSMC3 and HTATIP2. Interacts with STAB1; this interaction may overcome SATB1-mediated repression of IL2 and IL2RA (interleukin) in T cells by binding to the same domain than HDAC1. Interacts (when acetylated) with human CDK13, thereby increasing HIV-1 mRNA splicing and promoting the production of the doubly spliced HIV-1 protein Nef. Interacts with host TBP; this interaction modulates the activity of transcriptional pre-initiation complex. Interacts with host RELA. Interacts with host PLSCR1; this interaction negatively regulates Tat transactivation activity by altering its subcellular distribution. Asymmetrical arginine methylation by host PRMT6 seems to diminish the transactivation capacity of Tat and affects the interaction with host CCNT1. In terms of processing, acetylation by EP300, CREBBP, GCN5L2/GCN5 and PCAF regulates the transactivation activity of Tat. EP300-mediated acetylation of Lys-50 promotes dissociation of Tat from the TAR RNA through the competitive binding to PCAF's bromodomain. In addition, the non-acetylated Tat's N-terminus can also interact with PCAF. PCAF-mediated acetylation of Lys-28 enhances Tat's binding to CCNT1. Lys-50 is deacetylated by SIRT1. Post-translationally, polyubiquitination by host MDM2 does not target Tat to degradation, but activates its transactivation function and fosters interaction with CCNT1 and TAR RNA. Phosphorylated by EIF2AK2 on serine and threonine residues adjacent to the basic region important for TAR RNA binding and function. Phosphorylation of Tat by EIF2AK2 is dependent on the prior activation of EIF2AK2 by dsRNA.

It is found in the host nucleus. The protein localises to the host nucleolus. It localises to the host cytoplasm. Its subcellular location is the secreted. Its function is as follows. Transcriptional activator that increases RNA Pol II processivity, thereby increasing the level of full-length viral transcripts. Recognizes a hairpin structure at the 5'-LTR of the nascent viral mRNAs referred to as the transactivation responsive RNA element (TAR) and recruits the cyclin T1-CDK9 complex (P-TEFb complex) that will in turn hyperphosphorylate the RNA polymerase II to allow efficient elongation. The CDK9 component of P-TEFb and other Tat-activated kinases hyperphosphorylate the C-terminus of RNA Pol II that becomes stabilized and much more processive. Other factors such as HTATSF1/Tat-SF1, SUPT5H/SPT5, and HTATIP2 are also important for Tat's function. Besides its effect on RNA Pol II processivity, Tat induces chromatin remodeling of proviral genes by recruiting the histone acetyltransferases (HATs) CREBBP, EP300 and PCAF to the chromatin. This also contributes to the increase in proviral transcription rate, especially when the provirus integrates in transcriptionally silent region of the host genome. To ensure maximal activation of the LTR, Tat mediates nuclear translocation of NF-kappa-B by interacting with host RELA. Through its interaction with host TBP, Tat may also modulate transcription initiation. Tat can reactivate a latently infected cell by penetrating in it and transactivating its LTR promoter. In the cytoplasm, Tat is thought to act as a translational activator of HIV-1 mRNAs. In terms of biological role, extracellular circulating Tat can be endocytosed by surrounding uninfected cells via the binding to several surface receptors such as CD26, CXCR4, heparan sulfate proteoglycans (HSPG) or LDLR. Neurons are rarely infected, but they internalize Tat via their LDLR. Through its interaction with nuclear HATs, Tat is potentially able to control the acetylation-dependent cellular gene expression. Modulates the expression of many cellular genes involved in cell survival, proliferation or in coding for cytokines or cytokine receptors. Tat plays a role in T-cell and neurons apoptosis. Tat induced neurotoxicity and apoptosis probably contribute to neuroAIDS. Circulating Tat also acts as a chemokine-like and/or growth factor-like molecule that binds to specific receptors on the surface of the cells, affecting many cellular pathways. In the vascular system, Tat binds to ITGAV/ITGB3 and ITGA5/ITGB1 integrins dimers at the surface of endothelial cells and competes with bFGF for heparin-binding sites, leading to an excess of soluble bFGF. The sequence is that of Protein Tat from Homo sapiens (Human).